The sequence spans 316 residues: Haloacid dehalogenase-like hydrolase domain-containing protein At4g39970 (316 aa).

A chloroplast-targeting transit peptide spans 1–46 (MAVSCNHSAILFSPSSTAGSSSVTSSSSLIGFPRFQTLRFKSRSVY). The Nucleophile role is filled by Asp69. Mg(2+)-binding residues include Asp69, Asp71, and Asp259. Asp71 acts as the Proton donor in catalysis.

Belongs to the HAD-like hydrolase superfamily. DOG/GPP family. The cofactor is Mg(2+).

The protein resides in the plastid. It is found in the chloroplast. In Arabidopsis thaliana (Mouse-ear cress), this protein is Haloacid dehalogenase-like hydrolase domain-containing protein At4g39970.